The chain runs to 335 residues: Protein-arginine kinase (335 aa).

A Phosphagen kinase C-terminal domain is found at 21–244 (VIISSRIRLA…NQIINEEKQI (224 aa)). Residues 24-28 (SSRIR), His-82, Arg-115, 166-170 (RASVM), and 197-202 (RGIYGE) each bind ATP.

This sequence belongs to the ATP:guanido phosphotransferase family.

The enzyme catalyses L-arginyl-[protein] + ATP = N(omega)-phospho-L-arginyl-[protein] + ADP + H(+). Catalyzes the specific phosphorylation of arginine residues in proteins. This is Protein-arginine kinase from Staphylococcus epidermidis (strain ATCC 12228 / FDA PCI 1200).